We begin with the raw amino-acid sequence, 190 residues long: dCTP deaminase (190 aa).

107–112 (KSTYAR) is a binding site for dCTP. The active-site Proton donor/acceptor is Glu-133. Residues Gln-152, Tyr-166, and Gln-176 each coordinate dCTP.

Belongs to the dCTP deaminase family. As to quaternary structure, homotrimer.

It catalyses the reaction dCTP + H2O + H(+) = dUTP + NH4(+). Its pathway is pyrimidine metabolism; dUMP biosynthesis; dUMP from dCTP (dUTP route): step 1/2. Catalyzes the deamination of dCTP to dUTP. The polypeptide is dCTP deaminase (Campylobacter hominis (strain ATCC BAA-381 / DSM 21671 / CCUG 45161 / LMG 19568 / NCTC 13146 / CH001A)).